We begin with the raw amino-acid sequence, 200 residues long: Holliday junction branch migration complex subunit RuvA (200 aa).

A domain I region spans residues M1–P63. The interval D64–P142 is domain II. Residues P142 to G146 form a flexible linker region. A domain III region spans residues G147–R200.

The protein belongs to the RuvA family. As to quaternary structure, homotetramer. Forms an RuvA(8)-RuvB(12)-Holliday junction (HJ) complex. HJ DNA is sandwiched between 2 RuvA tetramers; dsDNA enters through RuvA and exits via RuvB. An RuvB hexamer assembles on each DNA strand where it exits the tetramer. Each RuvB hexamer is contacted by two RuvA subunits (via domain III) on 2 adjacent RuvB subunits; this complex drives branch migration. In the full resolvosome a probable DNA-RuvA(4)-RuvB(12)-RuvC(2) complex forms which resolves the HJ.

The protein localises to the cytoplasm. Its function is as follows. The RuvA-RuvB-RuvC complex processes Holliday junction (HJ) DNA during genetic recombination and DNA repair, while the RuvA-RuvB complex plays an important role in the rescue of blocked DNA replication forks via replication fork reversal (RFR). RuvA specifically binds to HJ cruciform DNA, conferring on it an open structure. The RuvB hexamer acts as an ATP-dependent pump, pulling dsDNA into and through the RuvAB complex. HJ branch migration allows RuvC to scan DNA until it finds its consensus sequence, where it cleaves and resolves the cruciform DNA. The chain is Holliday junction branch migration complex subunit RuvA from Rhodococcus jostii (strain RHA1).